The following is a 262-amino-acid chain: Vibriobactin-specific 2,3-dihydro-2,3-dihydroxybenzoate dehydrogenase (262 aa).

Position 12-36 (12-36) interacts with NAD(+); the sequence is LLVGSARGIGFSVLEHLLQAGAQVM. A substrate-binding site is contributed by S145. Y158 serves as the catalytic Proton acceptor.

It belongs to the short-chain dehydrogenases/reductases (SDR) family.

The catalysed reaction is (2S,3S)-2,3-dihydroxy-2,3-dihydrobenzoate + NAD(+) = 2,3-dihydroxybenzoate + NADH + H(+). It participates in siderophore biosynthesis; vibriobactin biosynthesis. Its function is as follows. Involved in an early step of the biosynthesis of the catechol siderophore vibriobactin. Vibriobactin is a chelating compound involved in transporting iron from the bacterial environment into the cell cytoplasm. The protein is Vibriobactin-specific 2,3-dihydro-2,3-dihydroxybenzoate dehydrogenase (vibA) of Vibrio cholerae serotype O1 (strain ATCC 39315 / El Tor Inaba N16961).